Reading from the N-terminus, the 111-residue chain is Large ribosomal subunit protein uL23 (111 aa).

Belongs to the universal ribosomal protein uL23 family. In terms of assembly, part of the 50S ribosomal subunit. Contacts protein L29, and trigger factor when it is bound to the ribosome.

Its function is as follows. One of the early assembly proteins it binds 23S rRNA. One of the proteins that surrounds the polypeptide exit tunnel on the outside of the ribosome. Forms the main docking site for trigger factor binding to the ribosome. The chain is Large ribosomal subunit protein uL23 from Chlamydia felis (strain Fe/C-56) (Chlamydophila felis).